The following is a 246-amino-acid chain: Proteasome subunit alpha type-6 (246 aa).

The protein belongs to the peptidase T1A family. In terms of assembly, the 26S proteasome consists of a 20S proteasome core and two 19S regulatory subunits. The 20S proteasome core is composed of 28 subunits that are arranged in four stacked rings, resulting in a barrel-shaped structure. The two end rings are each formed by seven alpha subunits, and the two central rings are each formed by seven beta subunits. The catalytic chamber with the active sites is on the inside of the barrel.

It is found in the cytoplasm. It localises to the nucleus. In terms of biological role, the proteasome is a multicatalytic proteinase complex which is characterized by its ability to cleave peptides with Arg, Phe, Tyr, Leu, and Glu adjacent to the leaving group at neutral or slightly basic pH. The proteasome has an ATP-dependent proteolytic activity. The polypeptide is Proteasome subunit alpha type-6 (PAA1) (Oryza sativa subsp. japonica (Rice)).